The primary structure comprises 433 residues: D-amino acid dehydrogenase (433 aa).

An FAD-binding site is contributed by 3–17; it reads VLVLGSGVIGTASAY.

The protein belongs to the DadA oxidoreductase family. The cofactor is FAD.

It catalyses the reaction a D-alpha-amino acid + A + H2O = a 2-oxocarboxylate + AH2 + NH4(+). It participates in amino-acid degradation; D-alanine degradation; NH(3) and pyruvate from D-alanine: step 1/1. In terms of biological role, oxidative deamination of D-amino acids. The polypeptide is D-amino acid dehydrogenase (Pseudomonas putida (strain W619)).